A 166-amino-acid polypeptide reads, in one-letter code: Small ribosomal subunit protein uS5 (166 aa).

The region spanning 11 to 74 (LQEKLIAVNR…EKARRNMINV (64 aa)) is the S5 DRBM domain.

The protein belongs to the universal ribosomal protein uS5 family. Part of the 30S ribosomal subunit. Contacts proteins S4 and S8.

Functionally, with S4 and S12 plays an important role in translational accuracy. Its function is as follows. Located at the back of the 30S subunit body where it stabilizes the conformation of the head with respect to the body. In Enterobacter sp. (strain 638), this protein is Small ribosomal subunit protein uS5.